Reading from the N-terminus, the 692-residue chain is Enzymatic polyprotein (692 aa).

The For protease activity role is filled by Asp-36. The Reverse transcriptase domain occupies Leu-227 to Ile-411.

Belongs to the caulimoviridae enzymatic polyprotein family.

The enzyme catalyses DNA(n) + a 2'-deoxyribonucleoside 5'-triphosphate = DNA(n+1) + diphosphate. Functionally, encodes for at least two polypeptides: protease (PR) and reverse transcriptase (RT). The protease processes the polyprotein in cis. Reverse transcriptase is multifunctional enzyme that converts the viral RNA genome into dsDNA in viral cytoplasmic capsids. This enzyme displays a DNA polymerase activity that can copy either DNA or RNA templates, and a ribonuclease H (RNase H) activity that cleaves the RNA strand of RNA-DNA heteroduplexes in a partially processive 3'- to 5'-endonucleasic mode. Neo-synthesized pregenomic RNA (pgRNA) are encapsidated, and reverse-transcribed inside the nucleocapsid. Partial (+)DNA is synthesized from the (-)DNA template and generates the relaxed circular DNA (RC-DNA) genome. After budding and infection, the RC-DNA migrates in the nucleus, and is converted into a plasmid-like covalently closed circular DNA (cccDNA). This chain is Enzymatic polyprotein, found in Soybean chlorotic mottle virus.